A 364-amino-acid chain; its full sequence is NAD(P)H-quinone oxidoreductase subunit 1, chloroplastic (364 aa).

6 consecutive transmembrane segments (helical) span residues 27–47 (IWLLVPIFTPVSGILIGVLVI), 98–118 (FSVGPSIAVISILLSYSVIPF), 127–147 (ISIGVFLWIAISSIAPIGLLM), 255–275 (GLFYVASYLNLLVSSLFVTVL), 301–321 (VFGSTIGILITLAKAYLFLFV), and 337–357 (LLNLGWKFLLPIALGNLLLTT).

It belongs to the complex I subunit 1 family. As to quaternary structure, NDH is composed of at least 16 different subunits, 5 of which are encoded in the nucleus.

It localises to the plastid. It is found in the chloroplast thylakoid membrane. The catalysed reaction is a plastoquinone + NADH + (n+1) H(+)(in) = a plastoquinol + NAD(+) + n H(+)(out). The enzyme catalyses a plastoquinone + NADPH + (n+1) H(+)(in) = a plastoquinol + NADP(+) + n H(+)(out). NDH shuttles electrons from NAD(P)H:plastoquinone, via FMN and iron-sulfur (Fe-S) centers, to quinones in the photosynthetic chain and possibly in a chloroplast respiratory chain. The immediate electron acceptor for the enzyme in this species is believed to be plastoquinone. Couples the redox reaction to proton translocation, and thus conserves the redox energy in a proton gradient. The sequence is that of NAD(P)H-quinone oxidoreductase subunit 1, chloroplastic from Illicium oligandrum (Star anise).